Reading from the N-terminus, the 308-residue chain is Cytochrome b (308 aa).

4 helical membrane passes run 1–21 (FGSL…LLAM), 45–66 (WLIR…YLHI), 81–101 (WNIG…GYVL), and 146–166 (FFAL…IHLT). The heme b site is built by histidine 51 and histidine 65. 2 residues coordinate heme b: histidine 150 and histidine 164. Histidine 169 is an a ubiquinone binding site. The next 3 helical transmembrane spans lie at 194-214 (TKDA…AMFS), 256-276 (LGGV…PLLH), and 288-308 (LSQF…WIGS).

Belongs to the cytochrome b family. As to quaternary structure, the cytochrome bc1 complex contains 11 subunits: 3 respiratory subunits (MT-CYB, CYC1 and UQCRFS1), 2 core proteins (UQCRC1 and UQCRC2) and 6 low-molecular weight proteins (UQCRH/QCR6, UQCRB/QCR7, UQCRQ/QCR8, UQCR10/QCR9, UQCR11/QCR10 and a cleavage product of UQCRFS1). This cytochrome bc1 complex then forms a dimer. Requires heme b as cofactor.

It is found in the mitochondrion inner membrane. In terms of biological role, component of the ubiquinol-cytochrome c reductase complex (complex III or cytochrome b-c1 complex) that is part of the mitochondrial respiratory chain. The b-c1 complex mediates electron transfer from ubiquinol to cytochrome c. Contributes to the generation of a proton gradient across the mitochondrial membrane that is then used for ATP synthesis. This Zaratornis stresemanni (White-cheeked cotinga) protein is Cytochrome b (MT-CYB).